We begin with the raw amino-acid sequence, 324 residues long: Olfactory receptor 5T17 (324 aa).

The Extracellular segment spans residues 1-37; the sequence is MPRTPSYTNTKTTQVNNVTEITVFILLGFTDDVDMNI. Asn-17 carries an N-linked (GlcNAc...) asparagine glycan. Residues 38 to 58 form a helical membrane-spanning segment; that stretch reads FLFILFLAIYVVTLIGNLGLV. The Cytoplasmic portion of the chain corresponds to 59 to 66; it reads VLVIEDSR. A helical transmembrane segment spans residues 67–87; it reads LHNPMYYFLTVLSSLDACFSS. Topologically, residues 88–111 are extracellular; it reads VLTPKMLVNFLSKNKSISFAGCAT. Asn-101 is a glycosylation site (N-linked (GlcNAc...) asparagine). Cys-109 and Cys-201 are disulfide-bonded. The helical transmembrane segment at 112–132 threads the bilayer; it reads QMLLFVTFGTTECFLLAAMAY. Residues 133–145 lie on the Cytoplasmic side of the membrane; sequence DRYLAIYSPLLYA. A helical transmembrane segment spans residues 146–166; it reads VRMSPRVYVPLIIASYTGGIL. Residues 167–208 are Extracellular-facing; it reads HATIHTVATFSLSFCGSNEIRHVFCDIPPLLALSCSDTHLNQ. The helical transmembrane segment at 209–229 threads the bilayer; that stretch reads LLLFYCAGSIELITILIVLVS. At 230-249 the chain is on the cytoplasmic side; the sequence is YGFVLLAILKINSAEGRRKI. The helical transmembrane segment at 250 to 270 threads the bilayer; the sequence is FSTCGAHLTGVSIFHGTILFM. At 271–283 the chain is on the extracellular side; it reads YVRPSSNYTLEQD. N-linked (GlcNAc...) asparagine glycosylation occurs at Asn-277. A helical membrane pass occupies residues 284-304; sequence MVVSTFYTIVIPMLNPIIYSL. Residues 305–324 lie on the Cytoplasmic side of the membrane; the sequence is RNKDVKEAMRKLLKRKLVHE.

Belongs to the G-protein coupled receptor 1 family.

It localises to the cell membrane. Functionally, potential odorant receptor. This Mus musculus (Mouse) protein is Olfactory receptor 5T17.